Reading from the N-terminus, the 666-residue chain is DNA ligase (666 aa).

Residues 31–35 (DKEFD), 80–81 (SL), and Glu-110 contribute to the NAD(+) site. Lys-112 acts as the N6-AMP-lysine intermediate in catalysis. NAD(+)-binding residues include Arg-133, Glu-170, Lys-285, and Lys-309. Cys-404, Cys-407, Cys-422, and Cys-428 together coordinate Zn(2+). The BRCT domain occupies 588–666 (GYTDKLAGQS…SEDEFLKLIS (79 aa)).

The protein belongs to the NAD-dependent DNA ligase family. LigA subfamily. Mg(2+) serves as cofactor. Requires Mn(2+) as cofactor.

It carries out the reaction NAD(+) + (deoxyribonucleotide)n-3'-hydroxyl + 5'-phospho-(deoxyribonucleotide)m = (deoxyribonucleotide)n+m + AMP + beta-nicotinamide D-nucleotide.. DNA ligase that catalyzes the formation of phosphodiester linkages between 5'-phosphoryl and 3'-hydroxyl groups in double-stranded DNA using NAD as a coenzyme and as the energy source for the reaction. It is essential for DNA replication and repair of damaged DNA. The polypeptide is DNA ligase (Bacteroides thetaiotaomicron (strain ATCC 29148 / DSM 2079 / JCM 5827 / CCUG 10774 / NCTC 10582 / VPI-5482 / E50)).